Consider the following 20-residue polypeptide: Agglutinin beta-3 chain (20 aa).

The interval 1–20 is disordered; the sequence is GPNGKSQSIIVGPWGDRVTN.

This sequence belongs to the jacalin lectin family. Formed of four alpha chains and four beta chains.

D-galactose-specific lectin, binds the T-antigen structure Gal-beta1,3-GalNAc. The polypeptide is Agglutinin beta-3 chain (Maclura pomifera (Osage orange)).